The sequence spans 109 residues: Urocortin-2 (109 aa).

The first 22 residues, 1–22, serve as a signal peptide directing secretion; the sequence is MTRWALVVFMVLMLDRVPGTPI. Residues 23-67 constitute a propeptide that is removed on maturation; that stretch reads PTFQLLPQNYPETTPSSVSSESPSDTTTGPSASWSNSKASPYLDT. Residues 24–60 form a disordered region; sequence TFQLLPQNYPETTPSSVSSESPSDTTTGPSASWSNSK. Low complexity predominate over residues 33-50; it reads PETTPSSVSSESPSDTTT. The span at 51–60 shows a compositional bias: polar residues; it reads GPSASWSNSK. Valine amide; partial is present on valine 106.

The protein belongs to the sauvagine/corticotropin-releasing factor/urotensin I family. Binds with high affinity to CRF receptors 2-alpha and 2-beta. Post-translationally, glycosylated.

It localises to the secreted. Its function is as follows. Suppresses food intake, delays gastric emptying and decreases heat-induced edema. Might represent an endogenous ligand for maintaining homeostasis after stress. The sequence is that of Urocortin-2 (Ucn2) from Rattus norvegicus (Rat).